Consider the following 410-residue polypeptide: Dual-specificity RNA methyltransferase RlmN (410 aa).

Residues 7-26 (VSSENLDGQQQSSSTPASPA) are disordered. Positions 15–26 (QQQSSSTPASPA) are enriched in low complexity. Residue glutamate 120 is the Proton acceptor of the active site. Residues 130 to 373 (TGSRKTLCIS…CTIRQTRGDD (244 aa)) enclose the Radical SAM core domain. An intrachain disulfide couples cysteine 137 to cysteine 378. [4Fe-4S] cluster is bound by residues cysteine 144, cysteine 148, and cysteine 151. S-adenosyl-L-methionine contacts are provided by residues 200-201 (GE), serine 232, 254-256 (SLH), and asparagine 335. Residue cysteine 378 is the S-methylcysteine intermediate of the active site.

Belongs to the radical SAM superfamily. RlmN family. [4Fe-4S] cluster is required as a cofactor.

Its subcellular location is the cytoplasm. The enzyme catalyses adenosine(2503) in 23S rRNA + 2 reduced [2Fe-2S]-[ferredoxin] + 2 S-adenosyl-L-methionine = 2-methyladenosine(2503) in 23S rRNA + 5'-deoxyadenosine + L-methionine + 2 oxidized [2Fe-2S]-[ferredoxin] + S-adenosyl-L-homocysteine. The catalysed reaction is adenosine(37) in tRNA + 2 reduced [2Fe-2S]-[ferredoxin] + 2 S-adenosyl-L-methionine = 2-methyladenosine(37) in tRNA + 5'-deoxyadenosine + L-methionine + 2 oxidized [2Fe-2S]-[ferredoxin] + S-adenosyl-L-homocysteine. Functionally, specifically methylates position 2 of adenine 2503 in 23S rRNA and position 2 of adenine 37 in tRNAs. m2A2503 modification seems to play a crucial role in the proofreading step occurring at the peptidyl transferase center and thus would serve to optimize ribosomal fidelity. The polypeptide is Dual-specificity RNA methyltransferase RlmN (Acinetobacter baumannii (strain AB307-0294)).